The sequence spans 259 residues: Phosphatidylglycerol--prolipoprotein diacylglyceryl transferase (259 aa).

4 helical membrane-spanning segments follow: residues 9-29 (IIFSIGPLAVSWYSLSYVVGI), 55-75 (FITYAVIGIIVGGRLGFVLLY), 92-112 (EGGMSFHGGALGVIIAAYLFC), and 117-137 (INFLSLTDIIAPVVPIGLFLG). Residue R138 participates in a 1,2-diacyl-sn-glycero-3-phospho-(1'-sn-glycerol) binding. Helical transmembrane passes span 172 to 192 (QLYEAFFEGLVLFCILAYATF), 201 to 221 (GLNSGIFLIFYALFRIAIEIF), and 228 to 248 (IGFILDSLTMGQILSVPMLLL).

The protein belongs to the Lgt family.

Its subcellular location is the cell inner membrane. It carries out the reaction L-cysteinyl-[prolipoprotein] + a 1,2-diacyl-sn-glycero-3-phospho-(1'-sn-glycerol) = an S-1,2-diacyl-sn-glyceryl-L-cysteinyl-[prolipoprotein] + sn-glycerol 1-phosphate + H(+). It functions in the pathway protein modification; lipoprotein biosynthesis (diacylglyceryl transfer). Functionally, catalyzes the transfer of the diacylglyceryl group from phosphatidylglycerol to the sulfhydryl group of the N-terminal cysteine of a prolipoprotein, the first step in the formation of mature lipoproteins. The chain is Phosphatidylglycerol--prolipoprotein diacylglyceryl transferase from Rickettsia felis (strain ATCC VR-1525 / URRWXCal2) (Rickettsia azadi).